The sequence spans 85 residues: Large ribosomal subunit protein bL27 (85 aa).

The segment at 1–21 is disordered; the sequence is MAHKKGGGSTKNGRDSNPKYL.

The protein belongs to the bacterial ribosomal protein bL27 family.

This chain is Large ribosomal subunit protein bL27, found in Chlorobium chlorochromatii (strain CaD3).